The chain runs to 219 residues: Poxin (219 aa).

Residue His17 is the Proton donor of the active site. The active-site Shared with catalytic histidine of dimeric partner is the Tyr138. Lys142 serves as the catalytic Proton acceptor; shared with catalytic histidine of dimeric partner.

This sequence belongs to the poxin family. As to quaternary structure, homodimer.

The catalysed reaction is 2',3'-cGAMP + H2O = Gp(2'-5')Ap(3') + H(+). Its function is as follows. Nuclease that is responsible for viral evasion of host cGAS-STING innate immunity. Cleaves 2',3'-cGAMP which is produced by host cGAS following recognition of cytosolic DNA and blocks the subsequent 2',3'-cGAMP-mediated activation of TMEM173/STING, which normally spreads to adjacent cells and activates the interferon and NF-kappa-B immune responses. The polypeptide is Poxin (OPG188) (Bos taurus (Bovine)).